A 900-amino-acid polypeptide reads, in one-letter code: Nuclear factor NF-kappa-B p100 subunit (900 aa).

Residues Ser-23 and Ser-161 each carry the phosphoserine modification. In terms of domain architecture, RHD spans 38 to 343 (PYLVIVEQPK…EVQRKRRKAL (306 aa)). Residues 337-341 (RKRRK) carry the Nuclear localization signal motif. Residues 346–377 (FSQPFGGGSHMGGGSGGAAGGYGGAGGGGSLG) form a GRR region. Residues 404–435 (GAQMAATVPSRDSGEEAAEPSAPSRTPQCEPQ) form a disordered region. Thr-429 bears the Phosphothreonine mark. ANK repeat units follow at residues 487–519 (NGDTPLHLAIIHGQTSVIEQIVYVIHHAQDLGV), 526–555 (LHQTPLHLAVITGQTSVVSFLLRVGADPAL), 559–591 (HGDSAMHLALRAGAGAPELLRALLQSGAPAVPQ), 599–628 (EGLYPVHLAVRARSPECLDLLVDSGAEVEA), 633–663 (GGRTALHLATEMEELGLVTHLVTKLRANVNA), and 667–696 (AGNTPLHLAAGLGYPTLTRLLLKAGADIHA). Residues 698-734 (NEEPLCPLPSPPTSDSDSDSEGPEKDTRSSFRGHTPL) form a disordered region. Residues Ser-713, Ser-715, and Ser-717 each carry the phosphoserine modification. The stretch at 729 to 758 (RGHTPLDLTCSTKVKTLLLNAAQNTMEPPL) is one ANK 7 repeat. A Death domain is found at 764 to 851 (AGPGLSLGDT…EGVRLLRGPE (88 aa)). Residue Ser-812 is modified to Phosphoserine. Positions 849-866 (GPETRDKLPSTAEVKEDS) are enriched in basic and acidic residues. The disordered stretch occupies residues 849-900 (GPETRDKLPSTAEVKEDSAYGSQSVEQEAEKLGPPPEPPGGLCHGHPQPQVH). Residue Lys-855 forms a Glycyl lysine isopeptide (Lys-Gly) (interchain with G-Cter in ubiquitin) linkage. A phosphoserine; by MAP3K14 mark is found at Ser-866 and Ser-870. Low complexity predominate over residues 888–900 (GGLCHGHPQPQVH).

As to quaternary structure, component of the NF-kappa-B RelB-p52 complex. Homodimer; component of the NF-kappa-B p52-p52 complex. Component of the NF-kappa-B p65-p52 complex. Component of the NF-kappa-B p52-c-Rel complex. NFKB2/p52 interacts with NFKBIE. Component of a complex consisting of the NF-kappa-B p50-p50 homodimer and BCL3. Directly interacts with MEN1. In terms of processing, while translation occurs, the particular unfolded structure after the GRR repeat promotes the generation of p52 making it an acceptable substrate for the proteasome. This process is known as cotranslational processing. The processed form is active and the unprocessed form acts as an inhibitor (I kappa B-like), being able to form cytosolic complexes with NF-kappa B, trapping it in the cytoplasm. Complete folding of the region downstream of the GRR repeat precludes processing. Subsequent to MAP3K14-dependent serine phosphorylation, p100 polyubiquitination occurs then triggering its proteasome-dependent processing. Post-translationally, constitutive processing is tightly suppressed by its C-terminal processing inhibitory domain, named PID, which contains the death domain. In terms of processing, ubiquitinated by TRIM55; leading to processing by VCP and subsequent ubiquitin-dependent protein degradation by the proteasome.

The protein localises to the nucleus. The protein resides in the cytoplasm. In terms of biological role, NF-kappa-B is a pleiotropic transcription factor present in almost all cell types and is the endpoint of a series of signal transduction events that are initiated by a vast array of stimuli related to many biological processes such as inflammation, immunity, differentiation, cell growth, tumorigenesis and apoptosis. NF-kappa-B is a homo- or heterodimeric complex formed by the Rel-like domain-containing proteins RELA/p65, RELB, NFKB1/p105, NFKB1/p50, REL and NFKB2/p52. The dimers bind at kappa-B sites in the DNA of their target genes and the individual dimers have distinct preferences for different kappa-B sites that they can bind with distinguishable affinity and specificity. Different dimer combinations act as transcriptional activators or repressors, respectively. NF-kappa-B is controlled by various mechanisms of post-translational modification and subcellular compartmentalization as well as by interactions with other cofactors or corepressors. NF-kappa-B complexes are held in the cytoplasm in an inactive state complexed with members of the NF-kappa-B inhibitor (I-kappa-B) family. In a conventional activation pathway, I-kappa-B is phosphorylated by I-kappa-B kinases (IKKs) in response to different activators, subsequently degraded thus liberating the active NF-kappa-B complex which translocates to the nucleus. In a non-canonical activation pathway, the MAP3K14-activated CHUK/IKKA homodimer phosphorylates NFKB2/p100 associated with RelB, inducing its proteolytic processing to NFKB2/p52 and the formation of NF-kappa-B RelB-p52 complexes. The NF-kappa-B heterodimeric RelB-p52 complex is a transcriptional activator. The NF-kappa-B p52-p52 homodimer is a transcriptional repressor. NFKB2 appears to have dual functions such as cytoplasmic retention of attached NF-kappa-B proteins by p100 and generation of p52 by a cotranslational processing. The proteasome-mediated process ensures the production of both p52 and p100 and preserves their independent function. p52 binds to the kappa-B consensus sequence 5'-GGRNNYYCC-3', located in the enhancer region of genes involved in immune response and acute phase reactions. p52 and p100 are respectively the minor and major form; the processing of p100 being relatively poor. Isoform p49 is a subunit of the NF-kappa-B protein complex, which stimulates the HIV enhancer in synergy with p65. In concert with RELB, regulates the circadian clock by repressing the transcriptional activator activity of the CLOCK-BMAL1 heterodimer. This Homo sapiens (Human) protein is Nuclear factor NF-kappa-B p100 subunit (NFKB2).